A 356-amino-acid chain; its full sequence is Histidinol-phosphate aminotransferase (356 aa).

N6-(pyridoxal phosphate)lysine is present on lysine 211.

This sequence belongs to the class-II pyridoxal-phosphate-dependent aminotransferase family. Histidinol-phosphate aminotransferase subfamily. In terms of assembly, homodimer. Pyridoxal 5'-phosphate is required as a cofactor.

The catalysed reaction is L-histidinol phosphate + 2-oxoglutarate = 3-(imidazol-4-yl)-2-oxopropyl phosphate + L-glutamate. Its pathway is amino-acid biosynthesis; L-histidine biosynthesis; L-histidine from 5-phospho-alpha-D-ribose 1-diphosphate: step 7/9. In Blochmanniella floridana, this protein is Histidinol-phosphate aminotransferase.